We begin with the raw amino-acid sequence, 60 residues long: MAVPRNRHSNARKNIRRSHDAKKACHAAKCSNCKHALLPHTICPSCGFYNGKAVMTVEKK.

The segment covering M1–R16 has biased composition (basic residues). Positions M1–D20 are disordered.

The protein belongs to the bacterial ribosomal protein bL32 family.

The polypeptide is Large ribosomal subunit protein bL32 (rpmF) (Chlamydia pneumoniae (Chlamydophila pneumoniae)).